A 1555-amino-acid polypeptide reads, in one-letter code: Protein TASOR (1555 aa).

5 disordered regions span residues 1–74 (MEEN…DKRA), 645–711 (QKKK…RQET), 744–773 (QNSTEELPSQKLKNLSQAHDTEREGAGQDQ), 870–911 (ALPN…TTPS), and 1390–1462 (NQGD…PTLD). Polar residues predominate over residues 35–47 (VQQTLKRTNSTES). Residues 61 to 71 (RRFQIPRKSRD) are compositionally biased toward basic residues. Residues 667–688 (DRQSEKAWKHRKCEENVHHDNE) are compositionally biased toward basic and acidic residues. Polar residues-rich tracts occupy residues 692 to 702 (SAQSLISSLGG) and 744 to 761 (QNSTEELPSQKLKNLSQA). A compositionally biased stretch (basic and acidic residues) spans 888-904 (PLHETERQRPRHDRDYC). The segment covering 1402 to 1417 (SKEEEDMSLDSEDDTP) has biased composition (acidic residues). Over residues 1448–1458 (ESPSTLNQGKT) the composition is skewed to polar residues.

The protein belongs to the TASOR family. Component of the HUSH complex.

Its subcellular location is the nucleus. The protein localises to the chromosome. Component of the HUSH complex, a multiprotein complex that mediates epigenetic repression. The HUSH complex is recruited to genomic loci rich in H3K9me3 and is probably required to maintain transcriptional silencing by promoting further deposition of H3K9me3. The chain is Protein TASOR from Xenopus laevis (African clawed frog).